We begin with the raw amino-acid sequence, 144 residues long: Putative pre-16S rRNA nuclease (144 aa).

This sequence belongs to the YqgF nuclease family.

The protein localises to the cytoplasm. In terms of biological role, could be a nuclease involved in processing of the 5'-end of pre-16S rRNA. The chain is Putative pre-16S rRNA nuclease from Prochlorococcus marinus (strain NATL1A).